Consider the following 64-residue polypeptide: MMRHLLLVGAAILIFVSDAQAQGDGEDPCQIVRCSYGANCIAYGDTAICECPFGYSGIRCQDPS.

A signal peptide spans 1-21; the sequence is MMRHLLLVGAAILIFVSDAQA. A Pyrrolidone carboxylic acid modification is found at Gln-22. The 37-residue stretch at 25–61 folds into the EGF-like domain; it reads GEDPCQIVRCSYGANCIAYGDTAICECPFGYSGIRCQ. 3 disulfides stabilise this stretch: Cys-29/Cys-40, Cys-34/Cys-49, and Cys-51/Cys-60.

Albumen gland. Up-regulated in adult CNS after axotomy.

It localises to the secreted. In terms of biological role, induces neurite outgrowth in specific adult neurons in vitro. This Lymnaea stagnalis (Great pond snail) protein is Epidermal growth factor.